A 269-amino-acid chain; its full sequence is 2-dehydro-3-deoxyphosphooctonate aldolase (269 aa).

This sequence belongs to the KdsA family.

The protein localises to the cytoplasm. It catalyses the reaction D-arabinose 5-phosphate + phosphoenolpyruvate + H2O = 3-deoxy-alpha-D-manno-2-octulosonate-8-phosphate + phosphate. Its pathway is carbohydrate biosynthesis; 3-deoxy-D-manno-octulosonate biosynthesis; 3-deoxy-D-manno-octulosonate from D-ribulose 5-phosphate: step 2/3. It participates in bacterial outer membrane biogenesis; lipopolysaccharide biosynthesis. The chain is 2-dehydro-3-deoxyphosphooctonate aldolase from Chlamydia felis (strain Fe/C-56) (Chlamydophila felis).